We begin with the raw amino-acid sequence, 357 residues long: Neutral protease 2 homolog BDCG_00922 (357 aa).

Positions 1–19 are cleaved as a signal peptide; sequence MRSPQSILAIVAFATTAIA. A propeptide spanning residues 20–182 is cleaved from the precursor; that stretch reads GVVPSTEKRA…FASLNQFSKR (163 aa). Cystine bridges form between Cys188-Cys259, Cys266-Cys284, and Cys297-Cys357. His308 contacts Zn(2+). Glu309 is an active-site residue. Residues His312 and Asp323 each contribute to the Zn(2+) site.

This sequence belongs to the peptidase M35 family. It depends on Zn(2+) as a cofactor.

The protein resides in the secreted. The catalysed reaction is Preferential cleavage of bonds with hydrophobic residues in P1'. Also 3-Asn-|-Gln-4 and 8-Gly-|-Ser-9 bonds in insulin B chain.. Functionally, secreted metalloproteinase that allows assimilation of proteinaceous substrates. Shows high activities on basic nuclear substrates such as histone and protamine. This chain is Neutral protease 2 homolog BDCG_00922, found in Ajellomyces dermatitidis (strain ER-3 / ATCC MYA-2586) (Blastomyces dermatitidis).